We begin with the raw amino-acid sequence, 159 residues long: Ribosomal RNA large subunit methyltransferase H (159 aa).

Residues Leu76, Gly108, and 127-132 contribute to the S-adenosyl-L-methionine site; that span reads FSKMTF.

The protein belongs to the RNA methyltransferase RlmH family. In terms of assembly, homodimer.

It localises to the cytoplasm. The catalysed reaction is pseudouridine(1915) in 23S rRNA + S-adenosyl-L-methionine = N(3)-methylpseudouridine(1915) in 23S rRNA + S-adenosyl-L-homocysteine + H(+). Its function is as follows. Specifically methylates the pseudouridine at position 1915 (m3Psi1915) in 23S rRNA. This Bacillus subtilis (strain 168) protein is Ribosomal RNA large subunit methyltransferase H.